The chain runs to 387 residues: Histone deacetylase 2 (387 aa).

A histone deacetylase region spans residues Lys-73 to Ile-382. The active-site Proton donor/acceptor is His-201. 3 residues coordinate Zn(2+): Asp-238, His-240, and Asp-318.

This sequence belongs to the histone deacetylase family. HD type 3 subfamily. It depends on Zn(2+) as a cofactor.

The protein localises to the nucleus. The catalysed reaction is N(6)-acetyl-L-lysyl-[histone] + H2O = L-lysyl-[histone] + acetate. In terms of biological role, responsible for the deacetylation of lysine residues on the N-terminal part of the core histones (H2A, H2B, H3 and H4). Histone deacetylation gives a tag for epigenetic repression and plays an important role in transcriptional regulation, cell cycle progression and developmental events. Histone deacetylases act via the formation of large multiprotein complexes. In Arabidopsis thaliana (Mouse-ear cress), this protein is Histone deacetylase 2 (HDA2).